A 322-amino-acid polypeptide reads, in one-letter code: Ras-like protein 2 (322 aa).

GTP is bound by residues 20–25, 36–42, 66–67, and 123–126; these read GVGKSA, VDEYDPT, AG, and NKSD. An Effector region motif is present at residues 39 to 47; that stretch reads YDPTIEDSY. A Glycyl lysine isopeptide (Lys-Gly) (interchain with G-Cter in ubiquitin) cross-link involves residue Lys131. Residue 153-155 participates in GTP binding; sequence SAK. The interval 178-322 is disordered; the sequence is YNKTLTENDN…SGSGGCCIIS (145 aa). Positions 180–205 are enriched in polar residues; that stretch reads KTLTENDNSKQTSQDTKGSGANSVPR. Residues Ser198, Ser202, Ser207, Ser214, Ser235, and Ser238 each carry the phosphoserine modification. A compositionally biased stretch (polar residues) spans 215–252; it reads NAANGKNVNSSTTVVNARNASIESKTGLAGNQATNGKT. Residues 261-284 are compositionally biased toward low complexity; the sequence is NSTGQAGQANAQSANTVNNRVNNN. Residues 285–294 show a composition bias toward polar residues; it reads SKAGQVSNAK. Residue Cys318 is the site of S-palmitoyl cysteine attachment. At Cys319 the chain carries Cysteine methyl ester. Residue Cys319 is the site of S-farnesyl cysteine attachment. A propeptide spans 320–322 (removed in mature form); the sequence is IIS.

The protein belongs to the small GTPase superfamily. Ras family. In terms of processing, farnesylated by RAM1-RAM2, which is required for targeting RAS2 to the cytoplasmic site of the endoplasmic reticulum, where proteolytic processing of the C-terminus by RCE1 and methylation of the resulting carboxyl group by STE14 occurs. Palmitoylated by the ERF2-SHR5 complex, which is required for proper plasma membrane localization of RAS2.

The protein resides in the cell membrane. The catalysed reaction is GTP + H2O = GDP + phosphate + H(+). Its activity is regulated as follows. Alternates between an inactive form bound to GDP and an active form bound to GTP. Activated by guanine nucleotide-exchange factor (GEF) CDC25 and inactivated by GTPase-activating proteins (GAPs) IRA1 and IRA2. In terms of biological role, the S.cerevisiae Ras proteins modulate the activity of the adenylate cyclase catalytic subunit and therefore affect the biosynthesis of cyclic-AMP. The polypeptide is Ras-like protein 2 (RAS2) (Saccharomyces cerevisiae (strain ATCC 204508 / S288c) (Baker's yeast)).